The chain runs to 114 residues: Probable 4-amino-4-deoxy-L-arabinose-phosphoundecaprenol flippase subunit ArnE (114 aa).

The next 3 helical transmembrane spans lie at 38–58 (LTLR…LLWL), 64–84 (LPLS…TLAA), and 94–114 (LRHW…SWHL). In terms of domain architecture, EamA spans 43-112 (LAIAVVSLGL…IIFGILLMSW (70 aa)).

The protein belongs to the ArnE family. As to quaternary structure, heterodimer of ArnE and ArnF.

Its subcellular location is the cell inner membrane. The protein operates within bacterial outer membrane biogenesis; lipopolysaccharide biosynthesis. Translocates 4-amino-4-deoxy-L-arabinose-phosphoundecaprenol (alpha-L-Ara4N-phosphoundecaprenol) from the cytoplasmic to the periplasmic side of the inner membrane. The sequence is that of Probable 4-amino-4-deoxy-L-arabinose-phosphoundecaprenol flippase subunit ArnE from Yersinia pseudotuberculosis serotype O:1b (strain IP 31758).